Reading from the N-terminus, the 74-residue chain is Protein SlyX homolog (74 aa).

Belongs to the SlyX family.

The sequence is that of Protein SlyX homolog from Neisseria meningitidis serogroup A / serotype 4A (strain DSM 15465 / Z2491).